Consider the following 68-residue polypeptide: Large ribosomal subunit protein eL24 (68 aa).

Positions 7, 10, 33, and 37 each coordinate Zn(2+). The segment at 7–37 (CSYCGREFEPGTGKMFVRNDGRVLFFCSSKC) adopts a C4-type zinc-finger fold.

This sequence belongs to the eukaryotic ribosomal protein eL24 family. In terms of assembly, part of the 50S ribosomal subunit. Forms a cluster with proteins L3 and L14. It depends on Zn(2+) as a cofactor.

Its function is as follows. Binds to the 23S rRNA. This is Large ribosomal subunit protein eL24 from Thermococcus gammatolerans (strain DSM 15229 / JCM 11827 / EJ3).